The following is a 413-amino-acid chain: 1-acylglycerol-3-phosphate O-acyltransferase Pnpla3 (413 aa).

Over 1–42 (MYDPERRWSLSFAGCGFLGFYHVGATLCLSERAPHLLRDART) the chain is Cytoplasmic. The region spanning 10–179 (LSFAGCGFLG…SDNVPVLDAK (170 aa)) is the PNPLA domain. Residues 14-19 (GCGFLG) carry the GXGXXG motif. A helical; Signal-anchor for type II membrane protein transmembrane segment spans residues 43–63 (FFGCSAGALHAVTFVCSLPLG). A GXSXG motif is present at residues 45–49 (GCSAG). Ser-47 acts as the Nucleophile in catalysis. Topologically, residues 64–413 (RIMEILMDLV…HKPQGNSAGL (350 aa)) are lumenal. Asp-166 functions as the Proton acceptor in the catalytic mechanism. The short motif at 166 to 168 (DGG) is the DGA/G element. N-linked (GlcNAc...) asparagine glycans are attached at residues Asn-206 and Asn-209. A disordered region spans residues 389–413 (KDDHRMLKHGHHPSPHKPQGNSAGL). Residues 394–403 (MLKHGHHPSP) are compositionally biased toward basic residues.

Restricted to adipose tissue. Expressed in inguinal and epididymal white adipose tissues and in interscapular brown adipose tissue. Also expressed in liver in response to high-sucrose diet.

It localises to the membrane. Its subcellular location is the lipid droplet. It catalyses the reaction a 1-acyl-sn-glycero-3-phosphate + an acyl-CoA = a 1,2-diacyl-sn-glycero-3-phosphate + CoA. It carries out the reaction a triacylglycerol + H2O = a diacylglycerol + a fatty acid + H(+). The catalysed reaction is a 1-acylglycerol + a 1,3-diacylglycerol = a triacylglycerol + glycerol. The enzyme catalyses a 1-acylglycerol + a 1,2-diacylglycerol = a triacylglycerol + glycerol. It catalyses the reaction 2 a 1-acylglycerol = a 1,2-diacylglycerol + glycerol. It carries out the reaction 1-(9Z-octadecenoyl)-sn-glycero-3-phosphate + (9Z)-octadecenoyl-CoA = 1,2-di-(9Z-octadecenoyl)-sn-glycero-3-phosphate + CoA. The catalysed reaction is 1-(9Z-octadecenoyl)-sn-glycero-3-phosphate + hexadecanoyl-CoA = 1-(9Z)-octadecenoyl-2-hexadecanoyl-sn-glycero-3-phosphate + CoA. The enzyme catalyses 1-(9Z-octadecenoyl)-sn-glycero-3-phosphate + (9Z,12Z)-octadecadienoyl-CoA = 1-(9Z)-octadecenoyl-2-(9Z,12Z)-octadecadienoyl-sn-glycero-3-phosphate + CoA. It catalyses the reaction 1-(9Z-octadecenoyl)-sn-glycero-3-phosphate + (5Z,8Z,11Z,14Z)-eicosatetraenoyl-CoA = 1-(9Z)-octadecenoyl-2-(5Z,8Z,11Z,14Z)-eicosatetraenoyl-sn-glycero-3-phosphate + CoA. It carries out the reaction 2 1-(9Z-octadecenoyl)-glycerol = 1,2-di-(9Z-octadecenoyl)-glycerol + glycerol. The catalysed reaction is 1-(9Z-octadecenoyl)-glycerol + 1,2-di-(9Z-octadecenoyl)-glycerol = 1,2,3-tri-(9Z-octadecenoyl)-glycerol + glycerol. The enzyme catalyses 1-(9Z-octadecenoyl)-glycerol + 1,3-di-(9Z-octadecenoyl)-glycerol = 1,2,3-tri-(9Z-octadecenoyl)-glycerol + glycerol. It catalyses the reaction 1,2,3-tri-(9Z-octadecenoyl)-glycerol + H2O = 1,3-di-(9Z-octadecenoyl)-glycerol + (9Z)-octadecenoate + H(+). It carries out the reaction a 1,2-diacyl-sn-glycero-3-phosphocholine + H2O = a 1-acyl-sn-glycero-3-phosphocholine + a fatty acid + H(+). It participates in phospholipid metabolism. Its pathway is glycerolipid metabolism. In terms of biological role, specifically catalyzes coenzyme A (CoA)-dependent acylation of 1-acyl-sn-glycerol 3-phosphate (2-lysophosphatidic acid/LPA) to generate phosphatidic acid (PA), an important metabolic intermediate and precursor for both triglycerides and glycerophospholipids. Does not esterify other lysophospholipids. Acyl donors are long chain (at least C16) fatty acyl-CoAs: arachidonoyl-CoA, linoleoyl-CoA, oleoyl-CoA and at a lesser extent palmitoyl-CoA. Additionally possesses low triacylglycerol lipase and CoA-independent acylglycerol transacylase activities and thus may play a role in acyl-chain remodeling of triglycerides. In vitro may express hydrolytic activity against glycerolipids triacylglycerol, diacylglycerol and monoacylglycerol, with a strong preference for oleic acid as the acyl moiety. However, the triacylglycerol hydrolase activity is controversial and may be very low. Possesses phospholipase A2 activity. The chain is 1-acylglycerol-3-phosphate O-acyltransferase Pnpla3 from Mus musculus (Mouse).